Consider the following 359-residue polypeptide: 24-methylenesterol C-methyltransferase 3 (359 aa).

Residues 4-24 (VALYCTAGLIAGAVYWFICVL) form a helical membrane-spanning segment.

The protein belongs to the class I-like SAM-binding methyltransferase superfamily. Erg6/SMT family.

The protein localises to the membrane. It carries out the reaction 24-methylidenelophenol + S-adenosyl-L-methionine = (Z)-24-ethylidenelophenol + S-adenosyl-L-homocysteine + H(+). Its pathway is steroid biosynthesis; sterol biosynthesis. Functionally, catalyzes the methyl transfer from S-adenosyl-methionine to the methylene group of 24-methylene lophenol to form 24-ethylidene lophenol. This chain is 24-methylenesterol C-methyltransferase 3 (SMT3), found in Arabidopsis thaliana (Mouse-ear cress).